The chain runs to 1249 residues: Nuclear envelope pore membrane protein POM 121 (1249 aa).

The span at 1–10 (MSPAAAAAGA) shows a compositional bias: low complexity. The disordered stretch occupies residues 1–27 (MSPAAAAAGAGERRRPIASVRDGRGRG). A cisternal side region spans residues 1–34 (MSPAAAAAGAGERRRPIASVRDGRGRGCGGPARA). The interval 1–285 (MSPAAAAAGA…APPDRRFSRS (285 aa)) is required for targeting to the nucleus and nuclear pore complex. A compositionally biased stretch (basic and acidic residues) spans 11–25 (GERRRPIASVRDGRG). Residues 35–55 (VLLGLSLVGLLLYLVPAAAAL) form a helical membrane-spanning segment. The pore side stretch occupies residues 56–1249 (AWLTVGATAA…QARRQHTRKK (1194 aa)). A Phosphoserine modification is found at serine 94. Disordered stretches follow at residues 136 to 220 (LMGS…CGTL), 319 to 530 (KEKK…LGYS), 602 to 776 (KKMQ…PVFS), 959 to 986 (PLPS…AKPA), and 1226 to 1249 (IGAG…TRKK). Positions 168–190 (ARPAPRSPPPRSPPPRSPPPSPP) are enriched in pro residues. Residues serine 345, serine 351, serine 371, serine 393, and serine 396 each carry the phosphoserine modification. Polar residues predominate over residues 405–423 (IPSSSRNAITSSYSSTRGI). The segment covering 432–445 (PSSSPFSSPASSRS) has biased composition (low complexity). Basic and acidic residues-rich tracts occupy residues 450–462 (RPAK…ELCH) and 472–486 (ADRE…DTTP). Residues 491 to 502 (NSNSQSTPGSSG) show a composition bias toward polar residues. Residues 635 to 652 (PPLGLSQSGPPGLLPSPS) show a composition bias toward low complexity. Residues 683–696 (QAETATKPQATSAP) are compositionally biased toward polar residues. Composition is skewed to low complexity over residues 712–726 (SPSS…SAPP) and 749–770 (SVTA…TAPT). The span at 1239–1249 (LQARRQHTRKK) shows a compositional bias: basic residues.

It belongs to the POM121 family.

Its subcellular location is the nucleus. The protein resides in the nuclear pore complex. It localises to the nucleus membrane. It is found in the endoplasmic reticulum membrane. Essential component of the nuclear pore complex (NPC). The repeat-containing domain may be involved in anchoring components of the pore complex to the pore membrane. When overexpressed in cells induces the formation of cytoplasmic annulate lamellae (AL). The sequence is that of Nuclear envelope pore membrane protein POM 121 (POM121) from Homo sapiens (Human).